The primary structure comprises 239 residues: Cytochrome c oxidase subunit 2 (239 aa).

Topologically, residues 1–26 are mitochondrial intermembrane; that stretch reads MATPAQLGLMDAASPVMEEMIYFHDH. The chain crosses the membrane as a helical span at residues 27–48; it reads VMLVLILITCLIFYSMLVLISS. Residues 49–62 are Mitochondrial matrix-facing; the sequence is KYIYRFLTDGHVIE. The helical transmembrane segment at 63-82 threads the bilayer; sequence TVWTVIPAIILVVVALPSLK. Residues 83 to 239 are Mitochondrial intermembrane-facing; it reads LLYLTDELDN…ESLGSLNMKR (157 aa). The Cu cation site is built by histidine 161, cysteine 196, glutamate 198, cysteine 200, histidine 204, and methionine 207. A Mg(2+)-binding site is contributed by glutamate 198.

This sequence belongs to the cytochrome c oxidase subunit 2 family. As to quaternary structure, component of the cytochrome c oxidase (complex IV, CIV), a multisubunit enzyme composed of a catalytic core of 3 subunits and several supernumerary subunits. The complex exists as a monomer or a dimer and forms supercomplexes (SCs) in the inner mitochondrial membrane with ubiquinol-cytochrome c oxidoreductase (cytochrome b-c1 complex, complex III, CIII). The cofactor is Cu cation.

It localises to the mitochondrion inner membrane. The catalysed reaction is 4 Fe(II)-[cytochrome c] + O2 + 8 H(+)(in) = 4 Fe(III)-[cytochrome c] + 2 H2O + 4 H(+)(out). In terms of biological role, component of the cytochrome c oxidase, the last enzyme in the mitochondrial electron transport chain which drives oxidative phosphorylation. The respiratory chain contains 3 multisubunit complexes succinate dehydrogenase (complex II, CII), ubiquinol-cytochrome c oxidoreductase (cytochrome b-c1 complex, complex III, CIII) and cytochrome c oxidase (complex IV, CIV), that cooperate to transfer electrons derived from NADH and succinate to molecular oxygen, creating an electrochemical gradient over the inner membrane that drives transmembrane transport and the ATP synthase. Cytochrome c oxidase is the component of the respiratory chain that catalyzes the reduction of oxygen to water. Electrons originating from reduced cytochrome c in the intermembrane space (IMS) are transferred via the dinuclear copper A center (CU(A)) of subunit 2 and heme A of subunit 1 to the active site in subunit 1, a binuclear center (BNC) formed by heme A3 and copper B (CU(B)). The BNC reduces molecular oxygen to 2 water molecules using 4 electrons from cytochrome c in the IMS and 4 protons from the mitochondrial matrix. The polypeptide is Cytochrome c oxidase subunit 2 (COII) (Branchiostoma lanceolatum (Common lancelet)).